Reading from the N-terminus, the 514-residue chain is Cilia- and flagella-associated protein 53 (514 aa).

Coiled-coil stretches lie at residues 91 to 148 and 203 to 474; these read IINI…RQDF and KLWE…REFE.

This sequence belongs to the CFAP53 family. Microtubule inner protein component of sperm flagellar doublet microtubules. Interacts with PIERCE1 and PIERCE2; the interactions link outer dynein arms docking complex (ODA-DC) to the internal microtubule inner proteins (MIP) in cilium axoneme. Interacts with CCDC38. Interacts with CCDC42 and IFT88. Interacts with centriolar satellite proteins PIBF1/CEP90 and PCM1. Interacts with dyneins DNAIC1, DNAIC2 AND DNAH11 and with ODA-DC component ODAD4/TTC25. Expressed in skin fibroblasts (at protein level). Expressed in nasal respiratory epithelial cells (at protein level). Expressed in airway epithelial cells.

It localises to the cytoplasm. The protein localises to the cytoskeleton. Its subcellular location is the cilium axoneme. The protein resides in the flagellum axoneme. It is found in the microtubule organizing center. It localises to the centrosome. The protein localises to the centriole. Its subcellular location is the centriolar satellite. The protein resides in the spindle pole. It is found in the cell projection. It localises to the cilium. Microtubule inner protein (MIP) part of the dynein-decorated doublet microtubules (DMTs) in cilia axoneme, which is required for motile cilia beating. Regulates motility patterns of both 9+0 and 9+2 motile cilia through differential localization and recruitment of axonemal dynein components. Required for centriolar satellite integrity and non-motile cilium assembly. Required for motile cilium formation. Through its role in the beating of primary cilia, involved in the establishment of organ laterality during embryogenesis. Required for sperm flagellum biogenesis and is essential for male fertility. This is Cilia- and flagella-associated protein 53 from Homo sapiens (Human).